Here is a 229-residue protein sequence, read N- to C-terminus: Probable endo-1,4-beta-xylanase A (229 aa).

The first 18 residues, 1-18 (MVSFKYLFLAASALGALA), serve as a signal peptide directing secretion. N-linked (GlcNAc...) asparagine glycosylation is found at Asn30 and Asn100. One can recognise a GH11 domain in the interval 41–229 (AGTPSSTGWN…SSGSSSITVY (189 aa)). Glu125 serves as the catalytic Nucleophile. Residue Glu216 is the Proton donor of the active site.

Belongs to the glycosyl hydrolase 11 (cellulase G) family.

Its subcellular location is the secreted. The enzyme catalyses Endohydrolysis of (1-&gt;4)-beta-D-xylosidic linkages in xylans.. It participates in glycan degradation; xylan degradation. In terms of biological role, endo-1,4-beta-xylanase involved in the hydrolysis of xylan, a major structural heterogeneous polysaccharide found in plant biomass representing the second most abundant polysaccharide in the biosphere, after cellulose. This Aspergillus clavatus (strain ATCC 1007 / CBS 513.65 / DSM 816 / NCTC 3887 / NRRL 1 / QM 1276 / 107) protein is Probable endo-1,4-beta-xylanase A (xlnA).